The chain runs to 297 residues: Lipoyl synthase (297 aa).

7 residues coordinate [4Fe-4S] cluster: C37, C42, C48, C63, C67, C70, and S276. The 217-residue stretch at 49 to 265 folds into the Radical SAM core domain; sequence WSRKHATVMI…ERIAKTKGFL (217 aa).

It belongs to the radical SAM superfamily. Lipoyl synthase family. [4Fe-4S] cluster serves as cofactor.

Its subcellular location is the cytoplasm. The enzyme catalyses [[Fe-S] cluster scaffold protein carrying a second [4Fe-4S](2+) cluster] + N(6)-octanoyl-L-lysyl-[protein] + 2 oxidized [2Fe-2S]-[ferredoxin] + 2 S-adenosyl-L-methionine + 4 H(+) = [[Fe-S] cluster scaffold protein] + N(6)-[(R)-dihydrolipoyl]-L-lysyl-[protein] + 4 Fe(3+) + 2 hydrogen sulfide + 2 5'-deoxyadenosine + 2 L-methionine + 2 reduced [2Fe-2S]-[ferredoxin]. The protein operates within protein modification; protein lipoylation via endogenous pathway; protein N(6)-(lipoyl)lysine from octanoyl-[acyl-carrier-protein]: step 2/2. In terms of biological role, catalyzes the radical-mediated insertion of two sulfur atoms into the C-6 and C-8 positions of the octanoyl moiety bound to the lipoyl domains of lipoate-dependent enzymes, thereby converting the octanoylated domains into lipoylated derivatives. The protein is Lipoyl synthase of Rickettsia typhi (strain ATCC VR-144 / Wilmington).